The following is a 300-amino-acid chain: NADH-cytochrome b5 reductase 2 (300 aa).

The helical transmembrane segment at 12–29 (FVYPLVGATIGSIGLAYY) threads the bilayer. The FAD-binding FR-type domain maps to 49-153 (DQWIDLKLKK…KGPVVKWKWE (105 aa)). 156 to 191 (QFKSIALIGGGTGITPLYQLLREITSNPEDKTKVSL) contacts FAD.

It belongs to the flavoprotein pyridine nucleotide cytochrome reductase family. It depends on FAD as a cofactor.

The protein localises to the mitochondrion outer membrane. It carries out the reaction 2 Fe(III)-[cytochrome b5] + NADH = 2 Fe(II)-[cytochrome b5] + NAD(+) + H(+). Functionally, may mediate the reduction of outer membrane cytochrome b5. This Lodderomyces elongisporus (strain ATCC 11503 / CBS 2605 / JCM 1781 / NBRC 1676 / NRRL YB-4239) (Yeast) protein is NADH-cytochrome b5 reductase 2 (MCR1).